We begin with the raw amino-acid sequence, 362 residues long: Protein mab-21-like 3 (362 aa).

This sequence belongs to the mab-21 family.

This is Protein mab-21-like 3 (MAB21L3) from Homo sapiens (Human).